Here is a 394-residue protein sequence, read N- to C-terminus: Acetate kinase (394 aa).

Asn8 contacts Mg(2+). ATP is bound at residue Lys15. Arg86 serves as a coordination point for substrate. Asp143 (proton donor/acceptor) is an active-site residue. ATP-binding positions include 201–205 (HLGNG), 276–278 (DCR), and 324–328 (GIGEN). Glu378 is a binding site for Mg(2+).

The protein belongs to the acetokinase family. Homodimer. Mg(2+) serves as cofactor. The cofactor is Mn(2+).

It is found in the cytoplasm. The enzyme catalyses acetate + ATP = acetyl phosphate + ADP. Its pathway is metabolic intermediate biosynthesis; acetyl-CoA biosynthesis; acetyl-CoA from acetate: step 1/2. Its function is as follows. Catalyzes the formation of acetyl phosphate from acetate and ATP. Can also catalyze the reverse reaction. This chain is Acetate kinase, found in Dichelobacter nodosus (strain VCS1703A).